Consider the following 1205-residue polypeptide: Nitric oxide synthase 3 (1205 aa).

Positions 1 to 73 are disordered; the sequence is MGNLKSVGQE…PPEGPKFPRV (73 aa). Residue Gly-2 is the site of N-myristoyl glycine attachment. 2 S-palmitoyl cysteine lipidation sites follow: Cys-15 and Cys-26. The span at 15–27 shows a compositional bias: gly residues; the sequence is CGLGLGLGLGLCG. The span at 33 to 47 shows a compositional bias: pro residues; the sequence is TPAPEPSRAPAPATP. 2 residues coordinate Zn(2+): Cys-96 and Cys-101. Residues 100 to 488 are interaction with NOSIP; it reads RCLGSLVLPR…PDPWKGSAAK (389 aa). Ser-104 is a binding site for (6R)-L-erythro-5,6,7,8-tetrahydrobiopterin. Residue Ser-116 is modified to Phosphoserine; by CDK5. Heme b is bound at residue Cys-186. Residues Gln-249, Trp-358, Tyr-359, Glu-363, and Asn-368 each contribute to the L-arginine site. Residues Ala-448, Trp-449, and Phe-462 each contribute to the (6R)-L-erythro-5,6,7,8-tetrahydrobiopterin site. Tyr-477 serves as a coordination point for heme b. A calmodulin-binding region spans residues 492-512; that stretch reads IARKKTFKEVANAVKISASLM. The residue at position 497 (Thr-497) is a Phosphothreonine; by AMPK. In terms of domain architecture, Flavodoxin-like spans 522 to 705; sequence ASILYASETV…AFRGWAQAAF (184 aa). FMN is bound by residues Ser-528, Glu-529, Thr-530, Arg-532, Ser-574, and Thr-575. Residues Ser-617, Ser-635, and Ser-640 each carry the phosphoserine modification. Positions 656, 663, 689, and 693 each coordinate FMN. Positions 758–1004 constitute an FAD-binding FR-type domain; the sequence is RKMFQATVLS…IRAAPSFRLP (247 aa). NADP(+) is bound at residue Arg-778. His-800 is an FAD binding site. Positions 820–848 are disordered; that stretch reads EDPTPPTESVGVEQLEKGSPGGPPPSWVR. Ser-838 bears the Phosphoserine mark. FAD contacts are provided by Arg-940, Tyr-942, Ser-943, Thr-958, Ala-960, Tyr-964, Val-977, Cys-978, and Ser-979. NADP(+) contacts are provided by Thr-1018, Arg-1051, Ser-1080, Arg-1081, Lys-1087, Tyr-1089, and Gln-1091. At Thr-1177 the chain carries Phosphothreonine. At Ser-1179 the chain carries Phosphoserine; by AMPK. Residue Ser-1181 is modified to Phosphoserine.

It belongs to the NOS family. As to quaternary structure, homodimer. Interacts with NOSIP and NOSTRIN. Interacts with HSP90AB1. Forms a complex with ASL, ASS1 and SLC7A1; the complex regulates cell-autonomous L-arginine synthesis and citrulline recycling while channeling extracellular L-arginine to nitric oxide synthesis pathway. It depends on heme b as a cofactor. Requires FAD as cofactor. The cofactor is FMN. (6R)-L-erythro-5,6,7,8-tetrahydrobiopterin is required as a cofactor. Phosphorylation by AMPK at Ser-1179 in the presence of Ca(2+)-calmodulin (CaM) activates activity. In absence of Ca(2+)-calmodulin, AMPK also phosphorylates Thr-497, resulting in inhibition of activity. Phosphorylation of Ser-116 by CDK5 reduces activity.

Its subcellular location is the membrane. The protein resides in the caveola. It is found in the cytoplasm. It localises to the cytoskeleton. The protein localises to the golgi apparatus. Its subcellular location is the cell membrane. It carries out the reaction 2 L-arginine + 3 NADPH + 4 O2 + H(+) = 2 L-citrulline + 2 nitric oxide + 3 NADP(+) + 4 H2O. Stimulated by calcium/calmodulin. Inhibited by NOSIP and NOSTRIN. Functionally, produces nitric oxide (NO) which is implicated in vascular smooth muscle relaxation through a cGMP-mediated signal transduction pathway. NO mediates vascular endothelial growth factor (VEGF)-induced angiogenesis in coronary vessels and promotes blood clotting through the activation of platelets. The sequence is that of Nitric oxide synthase 3 (NOS3) from Sus scrofa (Pig).